The following is a 135-amino-acid chain: Dihydromethanopterin reductase (135 aa).

NADP(+) is bound by residues alanine 9, 16-21 (LGLNGH), 52-54 (PKT), and 93-97 (GGIAV).

As to quaternary structure, homodimer.

The enzyme catalyses 5,6,7,8-tetrahydromethanopterin + NAD(+) = 7,8-dihydromethanopterin + NADH + H(+). It catalyses the reaction 5,6,7,8-tetrahydromethanopterin + NADP(+) = 7,8-dihydromethanopterin + NADPH + H(+). It participates in cofactor biosynthesis; 5,6,7,8-tetrahydromethanopterin biosynthesis. In terms of biological role, catalyzes the reduction of dihydromethanopterin (H(2)MPT) to tetrahydromethanopterin (H(4)MPT). Shows preference for NADPH rather than NADH as electron donor. Does not reduce dihydrofolate. In Methylorubrum extorquens (strain ATCC 14718 / DSM 1338 / JCM 2805 / NCIMB 9133 / AM1) (Methylobacterium extorquens), this protein is Dihydromethanopterin reductase (dmrA).